The following is a 402-amino-acid chain: Tyrosine--tRNA ligase (402 aa).

The 'HIGH' region signature appears at 47–56; the sequence is PTAPDLHLGH. Positions 232-236 match the 'KMSKS' region motif; that stretch reads KMSKS. Lysine 235 provides a ligand contact to ATP. One can recognise an S4 RNA-binding domain in the interval 341–401; that stretch reads VGVLDVLKQI…GKKRFMKLNI (61 aa).

The protein belongs to the class-I aminoacyl-tRNA synthetase family. TyrS type 2 subfamily. In terms of assembly, homodimer.

The protein resides in the cytoplasm. The catalysed reaction is tRNA(Tyr) + L-tyrosine + ATP = L-tyrosyl-tRNA(Tyr) + AMP + diphosphate + H(+). Its function is as follows. Catalyzes the attachment of tyrosine to tRNA(Tyr) in a two-step reaction: tyrosine is first activated by ATP to form Tyr-AMP and then transferred to the acceptor end of tRNA(Tyr). The sequence is that of Tyrosine--tRNA ligase from Helicobacter pylori (strain J99 / ATCC 700824) (Campylobacter pylori J99).